The chain runs to 160 residues: ATP synthase subunit b (160 aa).

Residues 15–35 traverse the membrane as a helical segment; it reads LVIVIGLLFWFLRGFLGGILE.

The protein belongs to the ATPase B chain family. As to quaternary structure, F-type ATPases have 2 components, F(1) - the catalytic core - and F(0) - the membrane proton channel. F(1) has five subunits: alpha(3), beta(3), gamma(1), delta(1), epsilon(1). F(0) has four main subunits: a(1), b(1), b'(1) and c(10-14). The alpha and beta chains form an alternating ring which encloses part of the gamma chain. F(1) is attached to F(0) by a central stalk formed by the gamma and epsilon chains, while a peripheral stalk is formed by the delta, b and b' chains.

The protein resides in the cellular thylakoid membrane. In terms of biological role, f(1)F(0) ATP synthase produces ATP from ADP in the presence of a proton or sodium gradient. F-type ATPases consist of two structural domains, F(1) containing the extramembraneous catalytic core and F(0) containing the membrane proton channel, linked together by a central stalk and a peripheral stalk. During catalysis, ATP synthesis in the catalytic domain of F(1) is coupled via a rotary mechanism of the central stalk subunits to proton translocation. Its function is as follows. Component of the F(0) channel, it forms part of the peripheral stalk, linking F(1) to F(0). The sequence is that of ATP synthase subunit b from Synechococcus sp. (strain CC9605).